We begin with the raw amino-acid sequence, 563 residues long: Light-independent protochlorophyllide reductase subunit B (563 aa).

Asp-36 is a [4Fe-4S] cluster binding site. Asp-349 serves as the catalytic Proton donor. 484 to 485 (GM) is a binding site for substrate.

Belongs to the ChlB/BchB/BchZ family. In terms of assembly, protochlorophyllide reductase is composed of three subunits; ChlL, ChlN and ChlB. Forms a heterotetramer of two ChlB and two ChlN subunits. Requires [4Fe-4S] cluster as cofactor.

It localises to the plastid. The protein localises to the chloroplast. It carries out the reaction chlorophyllide a + oxidized 2[4Fe-4S]-[ferredoxin] + 2 ADP + 2 phosphate = protochlorophyllide a + reduced 2[4Fe-4S]-[ferredoxin] + 2 ATP + 2 H2O. The protein operates within porphyrin-containing compound metabolism; chlorophyll biosynthesis (light-independent). Its function is as follows. Component of the dark-operative protochlorophyllide reductase (DPOR) that uses Mg-ATP and reduced ferredoxin to reduce ring D of protochlorophyllide (Pchlide) to form chlorophyllide a (Chlide). This reaction is light-independent. The NB-protein (ChlN-ChlB) is the catalytic component of the complex. This Chlamydomonas moewusii (Chlamydomonas eugametos) protein is Light-independent protochlorophyllide reductase subunit B.